The primary structure comprises 75 residues: UPF0235 protein Ava_3894 (75 aa).

Positions 1-32 (MQKKVKVKPNSKQQKIAEQDDGSLTVHLKSPP) are disordered.

It belongs to the UPF0235 family.

In Trichormus variabilis (strain ATCC 29413 / PCC 7937) (Anabaena variabilis), this protein is UPF0235 protein Ava_3894.